The chain runs to 542 residues: MTKSNGEEARLGGRMERFQQGVRKRTLLAKKKVQNITKEDVKSYLFRNAFVLLTVTAVIVGTILGFTLRPYRMSYREVKYFSFPGELLMRMLQMLVLPLIISSLVTGMAALDSKASGKMGMRAVVYYMTTTIIAVVIGIIIVIIIHPGKGTKENMHREGKIVQVTAADAFLDLIRNMFPPNLVEACFKQFKTNYEKRSFKVPIQPNETLVGAVINNVSEAMETLTRITEELVPVPGSVNGVNALGLVVFSMCFGFVIGNMKEQGQALREFFDSLNEAIMRLVAVIMWYAPLGILFLIAGKIVEMEDMGVIGGQLAMYTVTVIVGLLIHAVIVLPLLYFLVTRKNPWVFIGGLLQALITALGTSSSSATLPITFKCLEENNGVDKRVTRFVLPVGATINMDGTALYEALAAIFIAQVNNFELNFGQIITISITATAASIGAAGIPQAGLVTMVIVLTSVGLPTDDITLIIAVDWFLDRLRTTTNVLGDSLGAGIVEHLSRHELKNRDVEMGNSVIEENEMKKPYQLISQESEIEKSMDSETKM.

Residues M1–R47 are Cytoplasmic-facing. Residues N48–L68 traverse the membrane as a helical segment. At R69–E86 the chain is on the extracellular side. The helical transmembrane segment at L87 to M108 threads the bilayer. Over A109–R122 the chain is Cytoplasmic. A helical transmembrane segment spans residues A123 to I145. Over H146 to G236 the chain is Extracellular. A helical transmembrane segment spans residues S237–M260. Residues K261–E269 lie on the Cytoplasmic side of the membrane. A helical membrane pass occupies residues F270–I297. The Extracellular portion of the chain corresponds to A298 to T318. The helical transmembrane segment at V319–V340 threads the bilayer. The Cytoplasmic segment spans residues T341–P345. Residues W346–L376 constitute an intramembrane region (discontinuously helical). An L-aspartate-binding site is contributed by S363–S365. Residues E377 to R385 lie on the Cytoplasmic side of the membrane. The chain crosses the membrane as a helical span at residues V386–F412. Na(+) is bound by residues G394, T396, and N398. T402 contacts L-aspartate. The Extracellular segment spans residues I413–Q425. The segment at residues I426–G459 is an intramembrane region (discontinuously helical). I443–G447 is a binding site for L-aspartate. Over L460–D472 the chain is Extracellular. A helical transmembrane segment spans residues W473–V494. L-aspartate is bound by residues D476 and N483. 2 residues coordinate Na(+): N483 and D487. Residues E495–M542 are Cytoplasmic-facing. Phosphoserine is present on S512.

It belongs to the dicarboxylate/amino acid:cation symporter (DAACS) (TC 2.A.23) family. SLC1A3 subfamily. As to quaternary structure, homotrimer. Post-translationally, glycosylated.

Its subcellular location is the cell membrane. It carries out the reaction K(+)(in) + L-glutamate(out) + 3 Na(+)(out) + H(+)(out) = K(+)(out) + L-glutamate(in) + 3 Na(+)(in) + H(+)(in). It catalyses the reaction K(+)(in) + L-aspartate(out) + 3 Na(+)(out) + H(+)(out) = K(+)(out) + L-aspartate(in) + 3 Na(+)(in) + H(+)(in). The catalysed reaction is D-aspartate(out) + K(+)(in) + 3 Na(+)(out) + H(+)(out) = D-aspartate(in) + K(+)(out) + 3 Na(+)(in) + H(+)(in). Sodium-dependent, high-affinity amino acid transporter that mediates the uptake of L-glutamate and also L-aspartate and D-aspartate. Functions as a symporter that transports one amino acid molecule together with two or three Na(+) ions and one proton, in parallel with the counter-transport of one K(+) ion. Plays a redundant role in the rapid removal of released glutamate from the synaptic cleft, which is essential for terminating the postsynaptic action of glutamate. In Bos taurus (Bovine), this protein is Excitatory amino acid transporter 1 (SLC1A3).